Consider the following 393-residue polypeptide: Nuclear hormone receptor family member nhr-90 (393 aa).

Residues 6–79 (LQTCKICGAE…AGMKIEYFQH (74 aa)) constitute a DNA-binding region (nuclear receptor). The NR C4-type zinc finger occupies 9–30 (CKICGAENTRGNHFGVQCCRAC). The NR C4-type; degenerate zinc-finger motif lies at 47–62 (CLSVHCGEAARFCKPC). Residues 121 to 388 (DLNSLVGKAS…FSHPEMFIDT (268 aa)) enclose the NR LBD domain.

It belongs to the nuclear hormone receptor family.

Its subcellular location is the nucleus. Functionally, orphan nuclear receptor. The protein is Nuclear hormone receptor family member nhr-90 (nhr-90) of Caenorhabditis elegans.